The following is a 97-amino-acid chain: Co-chaperonin GroES (97 aa).

The protein belongs to the GroES chaperonin family. Heptamer of 7 subunits arranged in a ring. Interacts with the chaperonin GroEL.

Its subcellular location is the cytoplasm. In terms of biological role, together with the chaperonin GroEL, plays an essential role in assisting protein folding. The GroEL-GroES system forms a nano-cage that allows encapsulation of the non-native substrate proteins and provides a physical environment optimized to promote and accelerate protein folding. GroES binds to the apical surface of the GroEL ring, thereby capping the opening of the GroEL channel. In Photorhabdus laumondii subsp. laumondii (strain DSM 15139 / CIP 105565 / TT01) (Photorhabdus luminescens subsp. laumondii), this protein is Co-chaperonin GroES.